Here is a 131-residue protein sequence, read N- to C-terminus: Large ribosomal subunit protein bL12 (131 aa).

Belongs to the bacterial ribosomal protein bL12 family. Homodimer. Part of the ribosomal stalk of the 50S ribosomal subunit. Forms a multimeric L10(L12)X complex, where L10 forms an elongated spine to which 2 to 4 L12 dimers bind in a sequential fashion. Binds GTP-bound translation factors.

Forms part of the ribosomal stalk which helps the ribosome interact with GTP-bound translation factors. Is thus essential for accurate translation. This is Large ribosomal subunit protein bL12 from Parasynechococcus marenigrum (strain WH8102).